The chain runs to 161 residues: Tropomyosin-2 (161 aa).

Positions 1 to 161 (MEKIKEKLNS…DEIANSLENL (161 aa)) form a coiled coil. Residues 32-43 (LEQSNTEKENEI) are compositionally biased toward basic and acidic residues. The tract at residues 32–97 (LEQSNTEKEN…NQDLEQQLED (66 aa)) is disordered. Ser-55 bears the Phosphoserine mark. A compositionally biased stretch (polar residues) spans 62-83 (SQLSDTKQLAEDSNNLRSNNEN). Residues Ser-116 and Ser-157 each carry the phosphoserine modification.

As to quaternary structure, homodimer.

The protein localises to the cytoplasm. The protein resides in the cytoskeleton. Its function is as follows. Involved in cell morphogenesis. Binds to F-actin and stabilizes the actin filaments. The sequence is that of Tropomyosin-2 (TPM2) from Saccharomyces cerevisiae (strain ATCC 204508 / S288c) (Baker's yeast).